The sequence spans 466 residues: Cysteine--tRNA ligase (466 aa).

Cys27 is a Zn(2+) binding site. Positions 29-39 match the 'HIGH' region motif; it reads PTVYDLAHIGN. Positions 211, 236, and 240 each coordinate Zn(2+). The 'KMSKS' region motif lies at 270 to 274; the sequence is KMSKS. Lys273 is a binding site for ATP.

Belongs to the class-I aminoacyl-tRNA synthetase family. As to quaternary structure, monomer. Requires Zn(2+) as cofactor.

It is found in the cytoplasm. It carries out the reaction tRNA(Cys) + L-cysteine + ATP = L-cysteinyl-tRNA(Cys) + AMP + diphosphate. The polypeptide is Cysteine--tRNA ligase (Anaplasma marginale (strain St. Maries)).